A 257-amino-acid polypeptide reads, in one-letter code: tRNA pseudouridine synthase A (257 aa).

Asp-52 functions as the Nucleophile in the catalytic mechanism. Tyr-111 lines the substrate pocket.

Belongs to the tRNA pseudouridine synthase TruA family. In terms of assembly, homodimer.

The catalysed reaction is uridine(38/39/40) in tRNA = pseudouridine(38/39/40) in tRNA. Formation of pseudouridine at positions 38, 39 and 40 in the anticodon stem and loop of transfer RNAs. This Dinoroseobacter shibae (strain DSM 16493 / NCIMB 14021 / DFL 12) protein is tRNA pseudouridine synthase A.